Reading from the N-terminus, the 117-residue chain is Probable non-functional immunoglobulinn kappa variable 1-37 (117 aa).

The N-terminal stretch at 1-22 is a signal peptide; that stretch reads MDMRVPAQLLGLLLLWVPGARC. One can recognise an Ig-like domain in the interval 24 to 117; that stretch reads IQLTQSPSSL…YYGQRTYNAP (94 aa).

In terms of assembly, most probably, the immunoglobulin is not assembled due to incorrect folding of light chain. Immunoglobulins are composed of two identical heavy chains and two identical light chains; disulfide-linked.

The protein localises to the secreted. It is found in the cell membrane. In terms of biological role, probable non-functional open reading frame (ORF) of V region of the variable domain of immunoglobulin light chains. Non-functional ORF generally cannot participate in the synthesis of a productive immunoglobulin chain due to altered V-(D)-J or switch recombination and/or splicing site (at mRNA level) and/or conserved amino acid change (protein level). Immunoglobulins, also known as antibodies, are membrane-bound or secreted glycoproteins produced by B lymphocytes. In the recognition phase of humoral immunity, the membrane-bound immunoglobulins serve as receptors which, upon binding of a specific antigen, trigger the clonal expansion and differentiation of B lymphocytes into immunoglobulins-secreting plasma cells. Secreted immunoglobulins mediate the effector phase of humoral immunity, which results in the elimination of bound antigens. The antigen binding site is formed by the variable domain of one heavy chain, together with that of its associated light chain. Thus, each immunoglobulin has two antigen binding sites with remarkable affinity for a particular antigen. The variable domains are assembled by a process called V-(D)-J rearrangement and can then be subjected to somatic hypermutations which, after exposure to antigen and selection, allow affinity maturation for a particular antigen. The chain is Probable non-functional immunoglobulinn kappa variable 1-37 from Homo sapiens (Human).